The following is a 452-amino-acid chain: Ribosomal L1 domain-containing protein 1 (452 aa).

Met-1 bears the N-acetylmethionine mark. Glycyl lysine isopeptide (Lys-Gly) (interchain with G-Cter in SUMO2) cross-links involve residues Lys-119 and Lys-253. Residues 277–350 adopt a coiled-coil conformation; the sequence is LRSLRKQELK…QKVTEECEEA (74 aa). The interval 283-452 is disordered; that stretch reads QELKKRKREN…DKKTKAAHSN (170 aa). Residues 292-301 are compositionally biased toward basic and acidic residues; it reads NAKLKKESKM. Over residues 309 to 319 the composition is skewed to polar residues; it reads ATSLLTQSGLA. Over residues 330–341 the composition is skewed to basic residues; the sequence is QKKKTNKAHKKQ. Thr-334, Thr-344, Thr-360, Thr-399, and Thr-407 each carry phosphothreonine. The segment covering 414–423 has biased composition (basic and acidic residues); it reads KDVQEFRKPE. Polar residues predominate over residues 425 to 440; sequence SSFSTPRKSGKKASNT. Residue Thr-429 is modified to Phosphothreonine. Residue Lys-432 is modified to N6-acetyllysine. Position 433 is a phosphoserine (Ser-433).

This sequence belongs to the universal ribosomal protein uL1 family. Highly divergent. Interacts with ING1. Interacts with KPNA7 and KPNA2.

It is found in the nucleus. It localises to the nucleolus. Its function is as follows. Regulates cellular senescence through inhibition of PTEN translation. Acts as a pro-apoptotic regulator in response to DNA damage. This Mus musculus (Mouse) protein is Ribosomal L1 domain-containing protein 1.